The primary structure comprises 59 residues: Large ribosomal subunit protein uL30 (59 aa).

This sequence belongs to the universal ribosomal protein uL30 family. Part of the 50S ribosomal subunit.

The sequence is that of Large ribosomal subunit protein uL30 from Shewanella amazonensis (strain ATCC BAA-1098 / SB2B).